The following is a 187-amino-acid chain: Putative glutathione-dependent formaldehyde-activating enzyme (187 aa).

The CENP-V/GFA domain occupies 20–166 (FQGGVLKCKC…FESLGLESYD (147 aa)). Residues Cys-27, Cys-29, Cys-48, Cys-50, Cys-53, Cys-95, and Cys-98 each contribute to the Zn(2+) site.

Belongs to the Gfa family. Requires Zn(2+) as cofactor.

It carries out the reaction S-(hydroxymethyl)glutathione = glutathione + formaldehyde. The protein operates within one-carbon metabolism; formaldehyde degradation; formate from formaldehyde (glutathione route): step 1/3. Catalyzes the condensation of formaldehyde and glutathione to S-hydroxymethylglutathione. The polypeptide is Putative glutathione-dependent formaldehyde-activating enzyme (Verticillium alfalfae (strain VaMs.102 / ATCC MYA-4576 / FGSC 10136) (Verticillium wilt of alfalfa)).